The primary structure comprises 244 residues: 5-oxoprolinase subunit A (244 aa).

It belongs to the LamB/PxpA family. In terms of assembly, forms a complex composed of PxpA, PxpB and PxpC.

The catalysed reaction is 5-oxo-L-proline + ATP + 2 H2O = L-glutamate + ADP + phosphate + H(+). In terms of biological role, catalyzes the cleavage of 5-oxoproline to form L-glutamate coupled to the hydrolysis of ATP to ADP and inorganic phosphate. This is 5-oxoprolinase subunit A from Escherichia coli (strain SE11).